A 986-amino-acid polypeptide reads, in one-letter code: P3N-PIPO polyprotein (986 aa).

One can recognise a Peptidase S30 domain in the interval 141–284; sequence KLTEGQMNHL…QGVMDSMVQF (144 aa). Catalysis depends on for P1 proteinase activity residues His-192, Asp-201, and Ser-235. The Involved in interaction with stylet and aphid transmission signature appears at 334–337; the sequence is KITC. The Involved in virions binding and aphid transmission motif lies at 592–594; it reads PTK. Residues 618–740 form the Peptidase C6 domain; the sequence is LYIARQGFCY…ESDIKHYRVG (123 aa). Residues Cys-626 and His-699 each act as for helper component proteinase activity in the active site.

Belongs to the potyviridae P3N-PIPO polyprotein family. In terms of assembly, interacts (via PIPO domain) with host PCaP1 protein; this interaction may help to anchor the movement complex to the plasma membrane from which the complex could move to the plasmodesmata. Potyviral RNA is expressed as two polyproteins which undergo post-translational proteolytic processing. Genome polyprotein is processed by NIa-pro, P1 and HC-pro proteinases resulting in the production of at least ten individual proteins. P3N-PIPO is cleaved by P1 and HC-pro proteinases resulting in the production of three individual proteins. The P1 proteinase and the HC-pro cleave only their respective C-termini autocatalytically.

It localises to the host cell junction. It is found in the host plasmodesma. It carries out the reaction Hydrolyzes a Gly-|-Gly bond at its own C-terminus, commonly in the sequence -Tyr-Xaa-Val-Gly-|-Gly, in the processing of the potyviral polyprotein.. Its function is as follows. Required for aphid transmission and also has proteolytic activity. Only cleaves a Gly-Gly dipeptide at its own C-terminus. Interacts with virions and aphid stylets. Acts as a suppressor of RNA-mediated gene silencing, also known as post-transcriptional gene silencing (PTGS), a mechanism of plant viral defense that limits the accumulation of viral RNAs. May have RNA-binding activity. Allows efficient cell to cell propagation, by bypassing the host cell wall barrier. Transports viral genome to neighboring plant cells directly through plasmosdesmata, without any budding. The sequence is that of P3N-PIPO polyprotein from Capsicum (peppers).